Reading from the N-terminus, the 125-residue chain is uncharacterized protein (125 aa).

A helical transmembrane segment spans residues 10-26 (IIILVCLMFLAIMVYIY).

Its subcellular location is the membrane. This is an uncharacterized protein from Rickettsia prowazekii (strain Madrid E).